Consider the following 100-residue polypeptide: Small ribosomal subunit protein uS14c (100 aa).

It belongs to the universal ribosomal protein uS14 family. Part of the 30S ribosomal subunit.

It localises to the plastid. The protein localises to the chloroplast. Functionally, binds 16S rRNA, required for the assembly of 30S particles. This chain is Small ribosomal subunit protein uS14c, found in Ostreococcus tauri.